The following is a 92-amino-acid chain: Small ribosomal subunit protein bS16 (92 aa).

It belongs to the bacterial ribosomal protein bS16 family.

The sequence is that of Small ribosomal subunit protein bS16 from Staphylococcus carnosus (strain TM300).